The sequence spans 573 residues: Putative ATP-dependent RNA helicase R563 (573 aa).

Positions 57–233 constitute a Helicase ATP-binding domain; the sequence is INPKTPYKGL…ALTMNLLVRN (177 aa). 70–77 is a binding site for ATP; sequence HRIGAGKT. A DEAH box motif is present at residues 179 to 182; it reads DEVH. In terms of domain architecture, Helicase C-terminal spans 374–551; the sequence is KILRKIKRCN…AFEKALKEAA (178 aa).

Belongs to the DEAD box helicase family. DEAH subfamily.

Its subcellular location is the virion. The enzyme catalyses ATP + H2O = ADP + phosphate + H(+). This is Putative ATP-dependent RNA helicase R563 from Acanthamoeba polyphaga mimivirus (APMV).